A 698-amino-acid polypeptide reads, in one-letter code: Dolichyl-diphosphooligosaccharide--protein glycosyltransferase subunit 2 (698 aa).

The N-terminal stretch at 1 to 29 (MAAAGGLPASATLLLLVIAAVAVAPLASA) is a signal peptide. The Lumenal segment spans residues 30 to 600 (VRPVSDAHRS…RSPEKRPPKE (571 aa)). Residues 601–621 (LSFAFTGLTLLPIVGFLIGLM) traverse the membrane as a helical segment. Residues 622–638 (RLGVNLKNFPSLPAPAA) are Cytoplasmic-facing. A helical transmembrane segment spans residues 639 to 659 (FASLFHAGIGAVLLLYVLFWI). Residue lysine 660 is a topological domain, lumenal. A helical membrane pass occupies residues 661–681 (LDLFTTLKYLSFLGVFLVFVG). Topologically, residues 682-698 (HRALSYLSSTSAKQKTA) are cytoplasmic.

It belongs to the SWP1 family. Component of the oligosaccharyltransferase (OST) complex.

The protein localises to the endoplasmic reticulum membrane. The protein operates within protein modification; protein glycosylation. Subunit of the oligosaccharyl transferase (OST) complex that catalyzes the initial transfer of a defined glycan (Glc(3)Man(9)GlcNAc(2) in eukaryotes) from the lipid carrier dolichol-pyrophosphate to an asparagine residue within an Asn-X-Ser/Thr consensus motif in nascent polypeptide chains, the first step in protein N-glycosylation. N-glycosylation occurs cotranslationally and the complex associates with the Sec61 complex at the channel-forming translocon complex that mediates protein translocation across the endoplasmic reticulum (ER). All subunits are required for a maximal enzyme activity. The chain is Dolichyl-diphosphooligosaccharide--protein glycosyltransferase subunit 2 (RPN2) from Oryza sativa subsp. japonica (Rice).